Here is a 785-residue protein sequence, read N- to C-terminus: Endonuclease MutS2 (785 aa).

Glycine 332 to threonine 339 is an ATP binding site. The Smr domain occupies isoleucine 710–lysine 785.

This sequence belongs to the DNA mismatch repair MutS family. MutS2 subfamily. As to quaternary structure, homodimer. Binds to stalled ribosomes, contacting rRNA.

Functionally, endonuclease that is involved in the suppression of homologous recombination and thus may have a key role in the control of bacterial genetic diversity. Its function is as follows. Acts as a ribosome collision sensor, splitting the ribosome into its 2 subunits. Detects stalled/collided 70S ribosomes which it binds and splits by an ATP-hydrolysis driven conformational change. Acts upstream of the ribosome quality control system (RQC), a ribosome-associated complex that mediates the extraction of incompletely synthesized nascent chains from stalled ribosomes and their subsequent degradation. Probably generates substrates for RQC. The protein is Endonuclease MutS2 of Clostridium botulinum (strain Alaska E43 / Type E3).